A 198-amino-acid polypeptide reads, in one-letter code: Recombination protein RecR (198 aa).

The C4-type zinc finger occupies 57–72; it reads CSVCGNLTDEDPCSIC. In terms of domain architecture, Toprim spans 80 to 175; sequence SMILVVEDSK…KVTRLARGLA (96 aa).

This sequence belongs to the RecR family.

Functionally, may play a role in DNA repair. It seems to be involved in an RecBC-independent recombinational process of DNA repair. It may act with RecF and RecO. This Streptococcus uberis (strain ATCC BAA-854 / 0140J) protein is Recombination protein RecR.